We begin with the raw amino-acid sequence, 254 residues long: Probable phosphomannomutase (254 aa).

Aspartate 14 (nucleophile) is an active-site residue. Mg(2+) contacts are provided by aspartate 14 and aspartate 16. Aspartate 16 functions as the Proton donor/acceptor in the catalytic mechanism. Arginine 23, arginine 129, arginine 140, arginine 147, serine 185, and aspartate 187 together coordinate alpha-D-mannose 1-phosphate. Mg(2+) is bound by residues aspartate 214, phenylalanine 226, aspartate 228, and threonine 231.

The protein belongs to the eukaryotic PMM family. Homodimer.

It is found in the cytoplasm. It carries out the reaction alpha-D-mannose 1-phosphate = D-mannose 6-phosphate. It functions in the pathway nucleotide-sugar biosynthesis; GDP-alpha-D-mannose biosynthesis; alpha-D-mannose 1-phosphate from D-fructose 6-phosphate: step 2/2. Involved in the synthesis of the GDP-mannose and dolichol-phosphate-mannose required for a number of critical mannosyl transfer reactions. The chain is Probable phosphomannomutase from Caenorhabditis elegans.